The primary structure comprises 399 residues: Probable peptidoglycan glycosyltransferase FtsW (399 aa).

9 helical membrane-spanning segments follow: residues 19-39 (PLPV…VMIS), 61-81 (ILFA…PVSW), 85-105 (SGWL…TPLG), 114-134 (WIPM…CLIA), 160-180 (VLGV…TVVL), 198-218 (FMPL…TQPY), 285-305 (LLGA…GLVI), 314-334 (MAFG…QAGI), and 350-370 (LPLV…IAVI).

This sequence belongs to the SEDS family. FtsW subfamily.

It is found in the cell inner membrane. It catalyses the reaction [GlcNAc-(1-&gt;4)-Mur2Ac(oyl-L-Ala-gamma-D-Glu-L-Lys-D-Ala-D-Ala)](n)-di-trans,octa-cis-undecaprenyl diphosphate + beta-D-GlcNAc-(1-&gt;4)-Mur2Ac(oyl-L-Ala-gamma-D-Glu-L-Lys-D-Ala-D-Ala)-di-trans,octa-cis-undecaprenyl diphosphate = [GlcNAc-(1-&gt;4)-Mur2Ac(oyl-L-Ala-gamma-D-Glu-L-Lys-D-Ala-D-Ala)](n+1)-di-trans,octa-cis-undecaprenyl diphosphate + di-trans,octa-cis-undecaprenyl diphosphate + H(+). The protein operates within cell wall biogenesis; peptidoglycan biosynthesis. Functionally, peptidoglycan polymerase that is essential for cell division. This is Probable peptidoglycan glycosyltransferase FtsW from Marinobacter nauticus (strain ATCC 700491 / DSM 11845 / VT8) (Marinobacter aquaeolei).